The sequence spans 34 residues: Cytochrome c oxidase subunit 6B (34 aa).

This sequence belongs to the cytochrome c oxidase subunit 6B family. As to quaternary structure, component of the cytochrome c oxidase (complex IV, CIV), a multisubunit enzyme composed of 14 subunits. The complex is composed of a catalytic core of 3 subunits MT-CO1, MT-CO2 and MT-CO3, encoded in the mitochondrial DNA, and 11 supernumerary subunits COX4I, COX5A, COX5B, COX6A, COX6B, COX6C, COX7A, COX7B, COX7C, COX8 and NDUFA4, which are encoded in the nuclear genome. The complex exists as a monomer or a dimer and forms supercomplexes (SCs) in the inner mitochondrial membrane with NADH-ubiquinone oxidoreductase (complex I, CI) and ubiquinol-cytochrome c oxidoreductase (cytochrome b-c1 complex, complex III, CIII), resulting in different assemblies (supercomplex SCI(1)III(2)IV(1) and megacomplex MCI(2)III(2)IV(2)). In terms of processing, the N-terminus is blocked.

It localises to the mitochondrion inner membrane. It functions in the pathway energy metabolism; oxidative phosphorylation. Component of the cytochrome c oxidase, the last enzyme in the mitochondrial electron transport chain which drives oxidative phosphorylation. The respiratory chain contains 3 multisubunit complexes succinate dehydrogenase (complex II, CII), ubiquinol-cytochrome c oxidoreductase (cytochrome b-c1 complex, complex III, CIII) and cytochrome c oxidase (complex IV, CIV), that cooperate to transfer electrons derived from NADH and succinate to molecular oxygen, creating an electrochemical gradient over the inner membrane that drives transmembrane transport and the ATP synthase. Cytochrome c oxidase is the component of the respiratory chain that catalyzes the reduction of oxygen to water. Electrons originating from reduced cytochrome c in the intermembrane space (IMS) are transferred via the dinuclear copper A center (CU(A)) of subunit 2 and heme A of subunit 1 to the active site in subunit 1, a binuclear center (BNC) formed by heme A3 and copper B (CU(B)). The BNC reduces molecular oxygen to 2 water molecules using 4 electrons from cytochrome c in the IMS and 4 protons from the mitochondrial matrix. In Thunnus obesus (Bigeye tuna), this protein is Cytochrome c oxidase subunit 6B.